A 389-amino-acid chain; its full sequence is Chalcone synthase (389 aa).

Residue C164 is part of the active site.

Belongs to the thiolase-like superfamily. Chalcone/stilbene synthases family.

It catalyses the reaction (E)-4-coumaroyl-CoA + 3 malonyl-CoA + 3 H(+) = 2',4,4',6'-tetrahydroxychalcone + 3 CO2 + 4 CoA. It functions in the pathway secondary metabolite biosynthesis; flavonoid biosynthesis. The primary product of this enzyme is 4,2',4',6'-tetrahydroxychalcone (also termed naringenin-chalcone or chalcone) which can under specific conditions spontaneously isomerize into naringenin. The sequence is that of Chalcone synthase (CHS) from Pueraria montana var. lobata (Kudzu vine).